Reading from the N-terminus, the 156-residue chain is Small ribosomal subunit protein uS7 (156 aa).

This sequence belongs to the universal ribosomal protein uS7 family. As to quaternary structure, part of the 30S ribosomal subunit. Contacts proteins S9 and S11.

Functionally, one of the primary rRNA binding proteins, it binds directly to 16S rRNA where it nucleates assembly of the head domain of the 30S subunit. Is located at the subunit interface close to the decoding center, probably blocks exit of the E-site tRNA. The polypeptide is Small ribosomal subunit protein uS7 (Geobacillus kaustophilus (strain HTA426)).